A 59-amino-acid chain; its full sequence is UPF0434 protein RHOS4_00640 (59 aa).

This sequence belongs to the UPF0434 family.

In Cereibacter sphaeroides (strain ATCC 17023 / DSM 158 / JCM 6121 / CCUG 31486 / LMG 2827 / NBRC 12203 / NCIMB 8253 / ATH 2.4.1.) (Rhodobacter sphaeroides), this protein is UPF0434 protein RHOS4_00640.